The sequence spans 319 residues: Cell division protein FtsQ (319 aa).

Positions 1 to 53 are disordered; sequence MDSREDMVPDVLLEAPNPRRRQSADTSTERPTRPARREQGYARVTPRGERMGN. Residues 1 to 70 are Cytoplasmic-facing; that stretch reads MDSREDMVPD…PDFFAWFDPR (70 aa). Positions 27–52 are enriched in basic and acidic residues; it reads STERPTRPARREQGYARVTPRGERMG. The helical transmembrane segment at 71–87 threads the bilayer; sequence WLWVPLMVCLAVGGYWA. The Periplasmic portion of the chain corresponds to 88–319; that stretch reads YEPLEKLLER…NATRNAPTHP (232 aa). Residues 97–166 form the POTRA domain; the sequence is RPFKSVVVEG…DTLVVKIAEQ (70 aa).

This sequence belongs to the FtsQ/DivIB family. FtsQ subfamily. Part of a complex composed of FtsB, FtsL and FtsQ.

It localises to the cell inner membrane. Essential cell division protein. May link together the upstream cell division proteins, which are predominantly cytoplasmic, with the downstream cell division proteins, which are predominantly periplasmic. May control correct divisome assembly. This chain is Cell division protein FtsQ, found in Cellvibrio japonicus (strain Ueda107) (Pseudomonas fluorescens subsp. cellulosa).